We begin with the raw amino-acid sequence, 303 residues long: Putative S-adenosyl-L-methionine-dependent methyltransferase MAB_0213c (303 aa).

Residues Asp-126 and 155-156 (DL) each bind S-adenosyl-L-methionine.

This sequence belongs to the UPF0677 family.

Functionally, exhibits S-adenosyl-L-methionine-dependent methyltransferase activity. The protein is Putative S-adenosyl-L-methionine-dependent methyltransferase MAB_0213c of Mycobacteroides abscessus (strain ATCC 19977 / DSM 44196 / CCUG 20993 / CIP 104536 / JCM 13569 / NCTC 13031 / TMC 1543 / L948) (Mycobacterium abscessus).